Here is a 92-residue protein sequence, read N- to C-terminus: Small ribosomal subunit protein uS17 (92 aa).

It belongs to the universal ribosomal protein uS17 family. Part of the 30S ribosomal subunit.

Functionally, one of the primary rRNA binding proteins, it binds specifically to the 5'-end of 16S ribosomal RNA. The chain is Small ribosomal subunit protein uS17 from Cupriavidus necator (strain ATCC 17699 / DSM 428 / KCTC 22496 / NCIMB 10442 / H16 / Stanier 337) (Ralstonia eutropha).